Here is a 573-residue protein sequence, read N- to C-terminus: Maestro heat-like repeat-containing protein family member 9 (573 aa).

5 HEAT repeats span residues 118–155 (LYKLQILKEMLVWMSKDSSYLQERIMVIINKVLRFTVT), 252–289 (PLLTDFVQSLLMKLSSPDDKIASDAASILIFTLEFHAE), 292–328 (TMVSKIVDAIYRQLCDNNCMKDVMLQVITLLTCTSPK), 357–394 (SVAPHVLKTILLILKGKPGEMEDTVTEGKRFSLDITNL), and 418–458 (QYFP…LLNC).

The polypeptide is Maestro heat-like repeat-containing protein family member 9 (MROH9) (Homo sapiens (Human)).